The primary structure comprises 251 residues: ATP synthase delta chain, chloroplastic (251 aa).

The N-terminal 64 residues, 1 to 64, are a transit peptide targeting the chloroplast; that stretch reads MASLQHTTAS…STGGALGARM (64 aa).

It belongs to the ATPase delta chain family. As to quaternary structure, F-type ATPases have 2 components, CF(1) - the catalytic core - and CF(0) - the membrane proton channel. CF(1) has five subunits: alpha(3), beta(3), gamma(1), delta(1), epsilon(1). CF(0) has three main subunits: a, b and c.

It is found in the plastid. The protein localises to the chloroplast thylakoid membrane. Its function is as follows. This protein seems to be part of the stalk that links CF(0) to CF(1). It either transmits conformational changes from CF(0) into CF(1) or is implicated in proton conduction. The sequence is that of ATP synthase delta chain, chloroplastic (ATPD) from Pisum sativum (Garden pea).